Consider the following 212-residue polypeptide: Inactive ribonuclease-like protein 10 (212 aa).

Residues 1 to 24 (MKVTLVHLLFMMLLLLLGLGVGLG) form the signal peptide. N-linked (GlcNAc...) asparagine glycans are attached at residues asparagine 129 and asparagine 204.

This sequence belongs to the pancreatic ribonuclease family. In terms of processing, the N-terminus is blocked. Glycosylated. In terms of tissue distribution, male-specific expression in proximal caput of the epididymis.

It localises to the secreted. Functionally, secreted proximal epididymal protein required for post-testicular sperm maturation and male fertility. May be involved in sperm adhesion to the egg zona pellucida. Does not have ribonuclease activity. This is Inactive ribonuclease-like protein 10 (Rnase10) from Rattus norvegicus (Rat).